We begin with the raw amino-acid sequence, 293 residues long: Pantothenate synthetase (293 aa).

30–37 provides a ligand contact to ATP; that stretch reads MGYLHKGH. His37 (proton donor) is an active-site residue. Residue Gln61 coordinates (R)-pantoate. A beta-alanine-binding site is contributed by Gln61. 147–150 serves as a coordination point for ATP; sequence GEKD. Gln153 contributes to the (R)-pantoate binding site. ATP is bound by residues Val176 and 184–187; that span reads CSSR.

The protein belongs to the pantothenate synthetase family. Homodimer.

The protein localises to the cytoplasm. It carries out the reaction (R)-pantoate + beta-alanine + ATP = (R)-pantothenate + AMP + diphosphate + H(+). It participates in cofactor biosynthesis; (R)-pantothenate biosynthesis; (R)-pantothenate from (R)-pantoate and beta-alanine: step 1/1. Its function is as follows. Catalyzes the condensation of pantoate with beta-alanine in an ATP-dependent reaction via a pantoyl-adenylate intermediate. In Brucella melitensis biotype 2 (strain ATCC 23457), this protein is Pantothenate synthetase.